The sequence spans 64 residues: GRDAYIADSENCTYFCGSNPYCNDVCTENGAKSGYCQWAGRYGNACYCIDLPASERIKEPGKCG.

The region spanning 2 to 64 (RDAYIADSEN…ERIKEPGKCG (63 aa)) is the LCN-type CS-alpha/beta domain. Cystine bridges form between cysteine 12-cysteine 63, cysteine 16-cysteine 36, cysteine 22-cysteine 46, and cysteine 26-cysteine 48.

It belongs to the long (4 C-C) scorpion toxin superfamily. Sodium channel inhibitor family. Alpha subfamily. Expressed by the venom gland.

The protein resides in the secreted. In terms of biological role, alpha toxins bind voltage-independently at site-3 of sodium channels (Nav) and inhibit the inactivation of the activated channels, thereby blocking neuronal transmission. This acidic toxin has a weak toxicity and is active against mammals. The sequence is that of Alpha-mammal toxin BmK-M8 from Olivierus martensii (Manchurian scorpion).